The primary structure comprises 563 residues: Heat shock 70 kDa protein 8 (563 aa).

Positions 1–25 are disordered; sequence MAEAAYTVASDSENTGEEKSSSSPS. Alanine 2 is modified (N-acetylalanine).

The protein belongs to the heat shock protein 70 (TC 1.A.33) family. DnaK subfamily.

Functionally, in cooperation with other chaperones, Hsp70s are key components that facilitate folding of de novo synthesized proteins, assist translocation of precursor proteins into organelles, and are responsible for degradation of damaged protein under stress conditions. The protein is Heat shock 70 kDa protein 8 (HSP70-8) of Arabidopsis thaliana (Mouse-ear cress).